We begin with the raw amino-acid sequence, 70 residues long: MTILESITKISNASMDINKINSNNSNNINNNSNKIIQQLPFINIYEKSICTAIIPHNEIERKMPIFKRFC.

This is an uncharacterized protein from Dictyostelium discoideum (Social amoeba).